The chain runs to 468 residues: MGRRSGGRKLPFFASNASTSSSTKRTRSARRLPSLTRPRASSSPSPASPSPPPPSASHPAPPSPPLAVSPAGAGKVGKKKAGARLWMRLDRWGVSETLHLDKGSIIRRAGLPPRDLRILGPVFSDSSSILAREKAMVINLEFIRAIVTADEILLLDPLTIDVIPFVEQLTHHLPLKNLVCGNGQPGGDDHGEKHDDSPGDQVPRLNEATGAEHELPFEFQVLELALETVCSSFDVNVSGLERRATPVLEELTKNVSTRNLDRVRTLKSDLTRLLAHVQKVRDEIEHLLDDNEDMAHLYLTRKQLQNQQVEALISSAASNSIVPGGTSLSRLNNSFRRSVSIATSMHLDNDVEDLEMLLEAYFMQLDGIRNRILSVREYIDDTEDYVNIQLDNQRNELIQLQLTLTIASFGIAVNTFIAGAFAMNIQSKLYSIDDGSFFWPFVGGTSSGCFMICIVLLWYARWKKLLGP.

2 disordered regions span residues 1 to 76 and 182 to 205; these read MGRR…AGKV and NGQP…VPRL. 2 stretches are compositionally biased toward low complexity: residues 14–23 and 31–45; these read ASNASTSSST and RLPS…SSPS. A compositionally biased stretch (pro residues) spans 46 to 67; that stretch reads PASPSPPPPSASHPAPPSPPLA. A compositionally biased stretch (basic and acidic residues) spans 187–197; it reads GDDHGEKHDDS. A run of 2 helical transmembrane segments spans residues 402 to 422 and 437 to 457; these read LTLT…GAFA and FFWP…IVLL.

Belongs to the CorA metal ion transporter (MIT) (TC 1.A.35.5) family.

The protein resides in the membrane. Its function is as follows. Putative magnesium transporter. In Oryza sativa subsp. indica (Rice), this protein is Putative magnesium transporter MRS2-G (MRS2-G).